The sequence spans 750 residues: MKWTKRVIRYATKNRKSPAENRRRVGKSLSLLSVFVFAIFLVNFAVIIGTGTRFGTDLAKEAKKVHQTTRTVPAKRGTIYDRNGVPIAEDATSYNVYAVIDENYKSATGKILYVEKTQFNKVAEVFHKYLDMEESYVREQLSQPNLKQVSFGAKGNGITYANMMSIKKELEAAEVKGIDFTTSPNRSYPNGQFASSFIGLAQLHENEDGSKSLLGTSGMESSLNSILAGTDGIITYEKDRLGNIVPGTEQVSQRTMDGKDVYTTISSPLQSFMETQMDAFQEKVKGKYMTATLVSAKTGEILATTQRPTFDADTKEGITEDFVWRDILYQSNYEPGSTMKVMMLAAAIDNNTFPGGEVFNSSELKIADATIRDWDVNEGLTGGRTMTFSQGFAHSSNVGMTLLEQKMGDATWLDYLNRFKFGVPTRFGLTDEYAGQLPADNIVNIAQSSFGQGISVTQTQMIRAFTAIANDGVMLEPKFISAIYDPNDQTARKSQKEIVGNPVSKDAASLTRTNMVLVGTDPVYGTMYNHSTGKPTVTVPGQNVALKSGTAQIADEKNGGYLVGLTDYIFSAVSMSPAENPDFILYVTVQQPEHYSGIQLGEFANPILERASAMKDSLNLQTTAKALEQVSQQSPYPMPSVKDISPGDLAEELRRNLVQPIVVGTGTKIKNSSAEEGKNLAPNQQVLILSDKAEEVPDMYGWTKETAETLAKWLNIELEFQGSGSTVQKQDVRANTAIKDIKKITLTLGD.

Residues 29-49 (LSLLSVFVFAIFLVNFAVIIG) form a helical membrane-spanning segment. Serine 337 serves as the catalytic Acyl-ester intermediate. 2 PASTA domains span residues 632 to 691 (QQSP…ILSD) and 692 to 750 (KAEE…TLGD).

This sequence belongs to the transpeptidase family.

The protein localises to the cell membrane. Functionally, a transpeptidase that forms peptide cross-links between adjacent glycan strands in cell wall peptidoglycan (PG). Part of the divisome machinery that synthesizes the septal cross wall. Beta-lactams inactivate the PBPs by acylating an essential serine residue in the active site of these proteins. This Streptococcus pneumoniae serotype 4 (strain ATCC BAA-334 / TIGR4) protein is Penicillin-binding protein 2x (pbpX).